Reading from the N-terminus, the 83-residue chain is Aspergillic acid biosynthesis cluster protein F (83 aa).

The protein operates within secondary metabolite biosynthesis. Part of the gene cluster that mediates the biosynthesis of aspergillic acid, a hydroxamic acid-containing pyrazinone with aliphatic side chains that originates from leucine (Leu) and isoleucine (Ile). Aspergillic acid has antibiotic properties and was shown to be lethal to mice. The first step in the pathway is the production of deoxyaspergillic acid via a condensation between the Ile amine and the Leu carboxylic acid, followed by a reductive release from the protein forming the dipeptide aldehyde NH(2)-Leu-Ile-CHO, which could undergo an intermolecular cyclization resulting in a dihydropyrazinone. As the NRPS asaC lacks a condensation domain, it is improbable that it is responsible for condensation of Leu and Ile. One possibility is that asaC acts on a previously condensed dipeptide and functions as a Leu-Ile reductase to yield deoxyaspergillic acid. After asaC forms deoxyaspergillic acid, the cytochrome P450 asaD oxidizes the pyrazinone to the hydroxamic acid-containing bioactive metabolite aspergillic acid. The hydroxylase/desaturase asaB can then convert aspergillic acid to hydroxyaspergillic acid. Both aspergillic acid and hydroxyaspergillic acid can form complexes with iron producing ferriaspergillin analogs. This is Aspergillic acid biosynthesis cluster protein F from Aspergillus flavus (strain ATCC 200026 / FGSC A1120 / IAM 13836 / NRRL 3357 / JCM 12722 / SRRC 167).